The sequence spans 103 residues: Small ribosomal subunit protein bS18c (103 aa).

The protein belongs to the bacterial ribosomal protein bS18 family. As to quaternary structure, part of the 30S ribosomal subunit.

It is found in the plastid. The protein localises to the chloroplast. This Chlorella vulgaris (Green alga) protein is Small ribosomal subunit protein bS18c (rps18).